Consider the following 253-residue polypeptide: Phosphate import ATP-binding protein PstB 1 (253 aa).

In terms of domain architecture, ABC transporter spans 7 to 248 (LQIRDLSVYY…PKRKETEDYI (242 aa)). 39-46 (GPSGSGKS) contributes to the ATP binding site.

This sequence belongs to the ABC transporter superfamily. Phosphate importer (TC 3.A.1.7) family. As to quaternary structure, the complex is composed of two ATP-binding proteins (PstB), two transmembrane proteins (PstC and PstA) and a solute-binding protein (PstS).

It localises to the cell membrane. It catalyses the reaction phosphate(out) + ATP + H2O = ADP + 2 phosphate(in) + H(+). Its function is as follows. Part of the ABC transporter complex PstSACB involved in phosphate import. Responsible for energy coupling to the transport system. The chain is Phosphate import ATP-binding protein PstB 1 from Streptococcus pyogenes serotype M12 (strain MGAS9429).